A 184-amino-acid chain; its full sequence is Putative lyase MJ0807 (184 aa).

Belongs to the chorismate pyruvate-lyase type 2 family.

The protein is Putative lyase MJ0807 of Methanocaldococcus jannaschii (strain ATCC 43067 / DSM 2661 / JAL-1 / JCM 10045 / NBRC 100440) (Methanococcus jannaschii).